We begin with the raw amino-acid sequence, 240 residues long: UDP-2,3-diacylglucosamine hydrolase (240 aa).

5 residues coordinate Mn(2+): Asp8, His10, Asp41, Asn79, and His114. Substrate is bound at residue 79–80 (NR). Residues Asp122, Ser160, Asn164, Lys167, and His195 each contribute to the substrate site. Mn(2+) is bound by residues His195 and His197.

This sequence belongs to the LpxH family. Requires Mn(2+) as cofactor.

Its subcellular location is the cell inner membrane. It carries out the reaction UDP-2-N,3-O-bis[(3R)-3-hydroxytetradecanoyl]-alpha-D-glucosamine + H2O = 2-N,3-O-bis[(3R)-3-hydroxytetradecanoyl]-alpha-D-glucosaminyl 1-phosphate + UMP + 2 H(+). Its pathway is glycolipid biosynthesis; lipid IV(A) biosynthesis; lipid IV(A) from (3R)-3-hydroxytetradecanoyl-[acyl-carrier-protein] and UDP-N-acetyl-alpha-D-glucosamine: step 4/6. In terms of biological role, hydrolyzes the pyrophosphate bond of UDP-2,3-diacylglucosamine to yield 2,3-diacylglucosamine 1-phosphate (lipid X) and UMP by catalyzing the attack of water at the alpha-P atom. Involved in the biosynthesis of lipid A, a phosphorylated glycolipid that anchors the lipopolysaccharide to the outer membrane of the cell. The protein is UDP-2,3-diacylglucosamine hydrolase of Shigella boydii serotype 18 (strain CDC 3083-94 / BS512).